Here is a 538-residue protein sequence, read N- to C-terminus: NAD(P)H-quinone oxidoreductase chain 4 1 (538 aa).

13 helical membrane passes run phenylalanine 7–isoleucine 27, tryptophan 37–tyrosine 57, leucine 88–tryptophan 108, leucine 116–aspartate 136, leucine 137–isoleucine 157, phenylalanine 170–phenylalanine 190, alanine 210–phenylalanine 230, serine 244–isoleucine 264, phenylalanine 278–phenylalanine 298, methionine 315–leucine 335, glutamine 336–glutamate 356, leucine 388–threonine 408, and valine 418–methionine 438.

The protein belongs to the complex I subunit 4 family.

It is found in the cellular thylakoid membrane. The enzyme catalyses a plastoquinone + NADH + (n+1) H(+)(in) = a plastoquinol + NAD(+) + n H(+)(out). It carries out the reaction a plastoquinone + NADPH + (n+1) H(+)(in) = a plastoquinol + NADP(+) + n H(+)(out). Functionally, NDH-1 shuttles electrons from NAD(P)H, via FMN and iron-sulfur (Fe-S) centers, to quinones in the respiratory chain. The immediate electron acceptor for the enzyme in this species is believed to be plastoquinone. Couples the redox reaction to proton translocation (for every two electrons transferred, four hydrogen ions are translocated across the cytoplasmic membrane), and thus conserves the redox energy in a proton gradient. This Nostoc sp. (strain PCC 7120 / SAG 25.82 / UTEX 2576) protein is NAD(P)H-quinone oxidoreductase chain 4 1.